Reading from the N-terminus, the 325-residue chain is Elongation factor P--(R)-beta-lysine ligase (325 aa).

76–78 contributes to the substrate binding site; that stretch reads SPE. ATP is bound by residues 100 to 102 and Asn-109; that span reads RNE. A substrate-binding site is contributed by Tyr-118. 244 to 245 provides a ligand contact to ATP; sequence EL. A substrate-binding site is contributed by Glu-251. Gly-300 is an ATP binding site.

It belongs to the class-II aminoacyl-tRNA synthetase family. EpmA subfamily. In terms of assembly, homodimer.

It carries out the reaction D-beta-lysine + L-lysyl-[protein] + ATP = N(6)-((3R)-3,6-diaminohexanoyl)-L-lysyl-[protein] + AMP + diphosphate + H(+). Functionally, with EpmB is involved in the beta-lysylation step of the post-translational modification of translation elongation factor P (EF-P) on 'Lys-34'. Catalyzes the ATP-dependent activation of (R)-beta-lysine produced by EpmB, forming a lysyl-adenylate, from which the beta-lysyl moiety is then transferred to the epsilon-amino group of EF-P 'Lys-34'. The sequence is that of Elongation factor P--(R)-beta-lysine ligase from Salmonella choleraesuis (strain SC-B67).